The sequence spans 821 residues: Bifunctional dethiobiotin synthetase/7,8-diamino-pelargonic acid aminotransferase, mitochondrial (821 aa).

Positions 28–283 (SPAFAVFGAN…VHVLPPIPED (256 aa)) are dethiobiotin synthetase. Residue 39 to 44 (GVGKTL) coordinates ATP. Thr-43 is a Mg(2+) binding site. A substrate-binding site is contributed by Thr-72. Glu-194 is a Mg(2+) binding site. An ATP-binding site is contributed by 194 to 197 (ETAG). The tract at residues 316 to 820 (RLNSMQRKSK…AKVHRRLQKL (505 aa)) is 7,8-diamino-pelargonic acid aminotransferase. A (8S)-8-amino-7-oxononanoate-binding site is contributed by 374-375 (WW). A pyridoxal 5'-phosphate-binding site is contributed by 436 to 437 (GS). Tyr-482 contributes to the (8S)-8-amino-7-oxononanoate binding site. A pyridoxal 5'-phosphate-binding site is contributed by Asp-626. Lys-655 and Gly-689 together coordinate (8S)-8-amino-7-oxononanoate. Lys-655 is subject to N6-(pyridoxal phosphate)lysine. Residue Ser-691 coordinates pyridoxal 5'-phosphate. Arg-787 lines the (8S)-8-amino-7-oxononanoate pocket.

The protein in the N-terminal section; belongs to the dethiobiotin synthetase family. In the C-terminal section; belongs to the class-III pyridoxal-phosphate-dependent aminotransferase family. BioA subfamily. The cofactor is Mg(2+). It depends on pyridoxal 5'-phosphate as a cofactor.

It localises to the mitochondrion. The catalysed reaction is (7R,8S)-7,8-diammoniononanoate + CO2 + ATP = (4R,5S)-dethiobiotin + ADP + phosphate + 3 H(+). The enzyme catalyses (8S)-8-amino-7-oxononanoate + S-adenosyl-L-methionine = S-adenosyl-4-methylsulfanyl-2-oxobutanoate + (7R,8S)-7,8-diammoniononanoate. It participates in cofactor biosynthesis; biotin biosynthesis; biotin from 7,8-diaminononanoate: step 1/2. Its pathway is cofactor biosynthesis; biotin biosynthesis; 7,8-diaminononanoate from 8-amino-7-oxononanoate (SAM route): step 1/1. Its function is as follows. Bifunctional enzyme that catalyzes two different reactions involved in the biotin biosynthesis. In terms of biological role, catalyzes a mechanistically unusual reaction, the ATP-dependent insertion of CO2 between the N7 and N8 nitrogen atoms of 7,8-diaminopelargonic acid (DAPA) to form an ureido ring. Functionally, catalyzes the transfer of the alpha-amino group from S-adenosyl-L-methionine (SAM) to 7-keto-8-aminopelargonic acid (KAPA) to form 7,8-diaminopelargonic acid (DAPA). It is the only aminotransferase known to utilize SAM as an amino donor. The polypeptide is Bifunctional dethiobiotin synthetase/7,8-diamino-pelargonic acid aminotransferase, mitochondrial (BIO3-BIO1) (Oryza sativa subsp. japonica (Rice)).